A 276-amino-acid polypeptide reads, in one-letter code: MTGTTWHLLRTESTSPAENMAIDEAIANWVAKGELKPTLRFYSWAPHAISVGRFQRATRDLDRDALEANNIPVVRRLTGGRAVLHADELTYSVILPESTPALPTNIIESYRLLTEGVRRGYRELGVPAEFSVPLTEEDREALRKPKSAVCFDAASYYELAVDGKKIAGSAQVRHQGAVLQHGSIPLSVDDEVLFDCFAMDETEKQEAKTRFSEKAVALNDTLKRFVSFDEVAAAFETGFKDAFSLTFEPLVFTKEQQAEIDLLVKKYESDEWVWKR.

The region spanning 33–247 (GELKPTLRFY…GFKDAFSLTF (215 aa)) is the BPL/LPL catalytic domain. The active-site Acyl-thioester intermediate is Cys150.

The protein belongs to the octanoyltransferase LipM family. In terms of assembly, monomer.

It carries out the reaction octanoyl-[ACP] + L-lysyl-[protein] = N(6)-octanoyl-L-lysyl-[protein] + holo-[ACP] + H(+). It functions in the pathway protein modification; protein lipoylation via endogenous pathway; protein N(6)-(lipoyl)lysine from octanoyl-[acyl-carrier-protein]. In terms of biological role, catalyzes the transfer of endogenously produced octanoic acid from octanoyl-acyl-carrier-protein onto the lipoyl domain of GcvH, an intermediate carrier during protein lipoylation. This chain is Octanoyltransferase LipM, found in Exiguobacterium sp. (strain ATCC BAA-1283 / AT1b).